We begin with the raw amino-acid sequence, 345 residues long: Phosphoribosylformylglycinamidine cyclo-ligase (345 aa).

This sequence belongs to the AIR synthase family.

The protein localises to the cytoplasm. It catalyses the reaction 2-formamido-N(1)-(5-O-phospho-beta-D-ribosyl)acetamidine + ATP = 5-amino-1-(5-phospho-beta-D-ribosyl)imidazole + ADP + phosphate + H(+). The protein operates within purine metabolism; IMP biosynthesis via de novo pathway; 5-amino-1-(5-phospho-D-ribosyl)imidazole from N(2)-formyl-N(1)-(5-phospho-D-ribosyl)glycinamide: step 2/2. The polypeptide is Phosphoribosylformylglycinamidine cyclo-ligase (Bifidobacterium longum subsp. infantis (strain ATCC 15697 / DSM 20088 / JCM 1222 / NCTC 11817 / S12)).